The chain runs to 257 residues: Pantothenate synthetase (257 aa).

29–36 (MGNLHAGH) contacts ATP. His36 serves as the catalytic Proton donor. A (R)-pantoate-binding site is contributed by Gln60. Gln60 contributes to the beta-alanine binding site. 145–148 (GEKD) is a binding site for ATP. Gln151 contributes to the (R)-pantoate binding site. ATP is bound by residues Val174 and 182–185 (LSSR).

Belongs to the pantothenate synthetase family. In terms of assembly, homodimer.

It is found in the cytoplasm. It carries out the reaction (R)-pantoate + beta-alanine + ATP = (R)-pantothenate + AMP + diphosphate + H(+). The protein operates within cofactor biosynthesis; (R)-pantothenate biosynthesis; (R)-pantothenate from (R)-pantoate and beta-alanine: step 1/1. In terms of biological role, catalyzes the condensation of pantoate with beta-alanine in an ATP-dependent reaction via a pantoyl-adenylate intermediate. The chain is Pantothenate synthetase from Coxiella burnetii (strain CbuK_Q154) (Coxiella burnetii (strain Q154)).